We begin with the raw amino-acid sequence, 654 residues long: Translation factor GUF1, mitochondrial (654 aa).

Residues 57-237 enclose the tr-type G domain; sequence ENYRNFSIVA…SVIKNIPSPV (181 aa). GTP is bound by residues 66–73, 130–134, and 184–187; these read AHVDHGKS, DTPGH, and NKID.

It belongs to the TRAFAC class translation factor GTPase superfamily. Classic translation factor GTPase family. LepA subfamily.

The protein localises to the mitochondrion inner membrane. It catalyses the reaction GTP + H2O = GDP + phosphate + H(+). Promotes mitochondrial protein synthesis. May act as a fidelity factor of the translation reaction, by catalyzing a one-codon backward translocation of tRNAs on improperly translocated ribosomes. Binds to mitochondrial ribosomes in a GTP-dependent manner. The sequence is that of Translation factor GUF1, mitochondrial from Candida dubliniensis (strain CD36 / ATCC MYA-646 / CBS 7987 / NCPF 3949 / NRRL Y-17841) (Yeast).